The chain runs to 270 residues: Abhydrolase domain-containing protein C22H12.03 (270 aa).

The AB hydrolase-1 domain maps to 21–257; the sequence is PPVLIFHGLL…CGHWVHFEKP (237 aa). Catalysis depends on charge relay system residues Ser95, Glu190, and His250.

This sequence belongs to the AB hydrolase superfamily.

The protein resides in the mitochondrion. In Schizosaccharomyces pombe (strain 972 / ATCC 24843) (Fission yeast), this protein is Abhydrolase domain-containing protein C22H12.03.